Here is a 319-residue protein sequence, read N- to C-terminus: Acetyl-coenzyme A carboxylase carboxyl transferase subunit alpha (319 aa).

Residues asparagine 35–aspartate 296 form the CoA carboxyltransferase C-terminal domain.

Belongs to the AccA family. Acetyl-CoA carboxylase is a heterohexamer composed of biotin carboxyl carrier protein (AccB), biotin carboxylase (AccC) and two subunits each of ACCase subunit alpha (AccA) and ACCase subunit beta (AccD).

The protein resides in the cytoplasm. It carries out the reaction N(6)-carboxybiotinyl-L-lysyl-[protein] + acetyl-CoA = N(6)-biotinyl-L-lysyl-[protein] + malonyl-CoA. Its pathway is lipid metabolism; malonyl-CoA biosynthesis; malonyl-CoA from acetyl-CoA: step 1/1. Component of the acetyl coenzyme A carboxylase (ACC) complex. First, biotin carboxylase catalyzes the carboxylation of biotin on its carrier protein (BCCP) and then the CO(2) group is transferred by the carboxyltransferase to acetyl-CoA to form malonyl-CoA. The chain is Acetyl-coenzyme A carboxylase carboxyl transferase subunit alpha from Erwinia tasmaniensis (strain DSM 17950 / CFBP 7177 / CIP 109463 / NCPPB 4357 / Et1/99).